The following is a 315-amino-acid chain: FAD-linked oxidoreductase sthB (315 aa).

The FAD-binding PCMH-type domain occupies 19–201 (QPCSLGNYVS…LSMTSRVHAD (183 aa)).

This sequence belongs to the oxygen-dependent FAD-linked oxidoreductase family.

The enzyme catalyses betaenone C = betaenone A. It catalyses the reaction stemphyloxin I = stemphyloxin II. It participates in mycotoxin biosynthesis. FAD-linked oxidoreductase; part of the gene cluster that mediates the biosynthesis of the phytotoxin stemphyloxin II. The first step of the pathway is the synthesis of dehydroprobetaenone I by the polyketide synthase sthA and the enoyl reductase sthE via condensation of one acetyl-CoA starter unit with 7 malonyl-CoA units and 5 methylations. The C-terminal reductase (R) domain of sthA catalyzes the reductive release of the polyketide chain. Because sthA lacks a designated enoylreductase (ER) domain, the required activity is provided the enoyl reductase sthE. The short-chain dehydrogenase/reductase sthC then catalyzes reduction of dehydroprobetaenone I to probetaenone I. The cytochrome P450 monooxygenase sthF catalyzes successive epoxidation, oxidation (resulting from epoxide opening) and hydroxylation to install a tertiary alcohol in the decaline ring to yield betaenone C from dehydroprobetaenone I and betaenone B from probetaenone I. The FAD-linked oxidoreductase sthB is responsible for the conversion of betaenone C to betaenone A via an intramolecular aldol reaction between C-1 and C-17 to form the bridged tricyclic system in betaenone A. Finally, the cytochrome P450 monooxygenase sthD catalyzes the hydroxylation of C-15 to afford the final metabolite stemphyloxin II. This chain is FAD-linked oxidoreductase sthB, found in Phaeosphaeria nodorum (strain SN15 / ATCC MYA-4574 / FGSC 10173) (Glume blotch fungus).